The following is a 360-amino-acid chain: ASTRA-associated protein 1 (360 aa).

WD repeat units lie at residues 9–46, 49–86, 167–205, and 317–357; these read AHAA…PAAR, AHEG…NSKG, RGEG…CRML, and PEQS…ENGL.

Belongs to the WD repeat ASA1 family. As to quaternary structure, component of the ASTRA chromatin remodeling machinery complex.

It localises to the nucleus. Functionally, component of the ASTRA complex involved in chromatin remodeling. The polypeptide is ASTRA-associated protein 1 (ASA1) (Clavispora lusitaniae (strain ATCC 42720) (Yeast)).